The sequence spans 119 residues: MHELSITEELLKTIVAKAEEAKARNVSRINLVIGEYAGVVEDSVKMCFEILSQDTIANGAILEFSRIPAKFRCRLCGHTFPSGQNLLVCPECQGWNAEVIAGNEFFIESIEVDDESQSS.

His-2 contacts Ni(2+). The Zn(2+) site is built by Cys-73, Cys-76, Cys-89, and Cys-92.

Belongs to the HypA/HybF family.

In terms of biological role, involved in the maturation of [NiFe] hydrogenases. Required for nickel insertion into the metal center of the hydrogenase. The chain is Hydrogenase maturation factor HypA from Dehalococcoides mccartyi (strain ATCC BAA-2100 / JCM 16839 / KCTC 5957 / BAV1).